Consider the following 154-residue polypeptide: Large ribosomal subunit protein uL13 (154 aa).

Belongs to the universal ribosomal protein uL13 family. In terms of assembly, part of the 50S ribosomal subunit.

In terms of biological role, this protein is one of the early assembly proteins of the 50S ribosomal subunit, although it is not seen to bind rRNA by itself. It is important during the early stages of 50S assembly. The protein is Large ribosomal subunit protein uL13 of Brucella canis (strain ATCC 23365 / NCTC 10854 / RM-666).